Reading from the N-terminus, the 212-residue chain is Thymidylate kinase (212 aa).

ATP is bound at residue 11–18; sequence GPDGAGKS.

Belongs to the thymidylate kinase family.

The enzyme catalyses dTMP + ATP = dTDP + ADP. Phosphorylation of dTMP to form dTDP in both de novo and salvage pathways of dTTP synthesis. The protein is Thymidylate kinase of Streptococcus gordonii (strain Challis / ATCC 35105 / BCRC 15272 / CH1 / DL1 / V288).